Reading from the N-terminus, the 78-residue chain is Protein SlyX homolog (78 aa).

Belongs to the SlyX family.

In Xanthomonas euvesicatoria pv. vesicatoria (strain 85-10) (Xanthomonas campestris pv. vesicatoria), this protein is Protein SlyX homolog.